Here is a 218-residue protein sequence, read N- to C-terminus: Albicidin resistance protein (218 aa).

The protein localises to the periplasm. In terms of biological role, albicidin resistance protein binds to form a complex without antibiotic activity but without catalyzing any further chemical modifications to albicidin. This chain is Albicidin resistance protein, found in Klebsiella oxytoca.